The primary structure comprises 309 residues: General transcription factor IIH subunit 3 (309 aa).

A C4-type zinc finger spans residues 269 to 286 (CSVCLSIFCNFSPICTTC).

The protein belongs to the TFB4 family. Part of a TFIID-containing RNA polymerase II pre-initiation complex that is composed of TBP and at least GTF2A1, GTF2A2, GTF2E1, GTF2E2, GTF2F1, GTF2H2, GTF2H3, GTF2H4, GTF2H5, GTF2B, TCEA1, ERCC2, ERCC3, TAF1, TAF2, TAF3, TAF4, TAF5, TAF6, TAF7, TAF8, TAF9, TAF10, TAF11, TAF12 and TAF13. Component of the 7-subunit TFIIH core complex composed of XPB/ERCC3, XPD/ERCC2, GTF2H1, GTF2H2, GTF2H3, GTF2H4 and GTF2H5, which is active in NER. The core complex associates with the 3-subunit CDK-activating kinase (CAK) module composed of CCNH/cyclin H, CDK7 and MNAT1 to form the 10-subunit holoenzyme (holo-TFIIH) active in transcription. Interacts with RARA; the interaction requires prior phosphorylation of RARA on 'Ser-369' which then enhances interaction of RARA with CDK7.

It localises to the nucleus. In terms of biological role, component of the general transcription and DNA repair factor IIH (TFIIH) core complex, which is involved in general and transcription-coupled nucleotide excision repair (NER) of damaged DNA and, when complexed to CAK, in RNA transcription by RNA polymerase II. In NER, TFIIH acts by opening DNA around the lesion to allow the excision of the damaged oligonucleotide and its replacement by a new DNA fragment. In transcription, TFIIH has an essential role in transcription initiation. When the pre-initiation complex (PIC) has been established, TFIIH is required for promoter opening and promoter escape. Phosphorylation of the C-terminal tail (CTD) of the largest subunit of RNA polymerase II by the kinase module CAK controls the initiation of transcription. The protein is General transcription factor IIH subunit 3 (Gtf2h3) of Rattus norvegicus (Rat).